The chain runs to 101 residues: NAD(P)H-quinone oxidoreductase subunit 4L, chloroplastic (101 aa).

Transmembrane regions (helical) follow at residues 2 to 22 (MFEY…YGLI), 32 to 52 (MCLE…SDLF), and 61 to 81 (IFSI…PAIV).

This sequence belongs to the complex I subunit 4L family. NDH is composed of at least 16 different subunits, 5 of which are encoded in the nucleus.

It is found in the plastid. The protein resides in the chloroplast thylakoid membrane. The catalysed reaction is a plastoquinone + NADH + (n+1) H(+)(in) = a plastoquinol + NAD(+) + n H(+)(out). It carries out the reaction a plastoquinone + NADPH + (n+1) H(+)(in) = a plastoquinol + NADP(+) + n H(+)(out). Its function is as follows. NDH shuttles electrons from NAD(P)H:plastoquinone, via FMN and iron-sulfur (Fe-S) centers, to quinones in the photosynthetic chain and possibly in a chloroplast respiratory chain. The immediate electron acceptor for the enzyme in this species is believed to be plastoquinone. Couples the redox reaction to proton translocation, and thus conserves the redox energy in a proton gradient. This Amborella trichopoda protein is NAD(P)H-quinone oxidoreductase subunit 4L, chloroplastic.